A 414-amino-acid polypeptide reads, in one-letter code: Serine--tRNA ligase (414 aa).

230-232 (TSE) is an L-serine binding site. 261–263 (RQE) contacts ATP. An L-serine-binding site is contributed by Glu284. ATP is bound at residue 348-351 (EISS). L-serine is bound at residue Ser382.

The protein belongs to the class-II aminoacyl-tRNA synthetase family. Type-1 seryl-tRNA synthetase subfamily. In terms of assembly, homodimer. The tRNA molecule binds across the dimer.

Its subcellular location is the cytoplasm. It catalyses the reaction tRNA(Ser) + L-serine + ATP = L-seryl-tRNA(Ser) + AMP + diphosphate + H(+). The enzyme catalyses tRNA(Sec) + L-serine + ATP = L-seryl-tRNA(Sec) + AMP + diphosphate + H(+). The protein operates within aminoacyl-tRNA biosynthesis; selenocysteinyl-tRNA(Sec) biosynthesis; L-seryl-tRNA(Sec) from L-serine and tRNA(Sec): step 1/1. Functionally, catalyzes the attachment of serine to tRNA(Ser). Is also able to aminoacylate tRNA(Sec) with serine, to form the misacylated tRNA L-seryl-tRNA(Sec), which will be further converted into selenocysteinyl-tRNA(Sec). The chain is Serine--tRNA ligase from Campylobacter fetus subsp. fetus (strain 82-40).